The primary structure comprises 86 residues: ATP synthase subunit c (86 aa).

2 consecutive transmembrane segments (helical) span residues 8 to 28 and 66 to 86; these read VLAA…GAGI and GIYA…IGML.

Belongs to the ATPase C chain family. As to quaternary structure, F-type ATPases have 2 components, F(1) - the catalytic core - and F(0) - the membrane proton channel. F(1) has five subunits: alpha(3), beta(3), gamma(1), delta(1), epsilon(1). F(0) has three main subunits: a(1), b(2) and c(10-14). The alpha and beta chains form an alternating ring which encloses part of the gamma chain. F(1) is attached to F(0) by a central stalk formed by the gamma and epsilon chains, while a peripheral stalk is formed by the delta and b chains.

Its subcellular location is the cell membrane. Functionally, f(1)F(0) ATP synthase produces ATP from ADP in the presence of a proton or sodium gradient. F-type ATPases consist of two structural domains, F(1) containing the extramembraneous catalytic core and F(0) containing the membrane proton channel, linked together by a central stalk and a peripheral stalk. During catalysis, ATP synthesis in the catalytic domain of F(1) is coupled via a rotary mechanism of the central stalk subunits to proton translocation. In terms of biological role, key component of the F(0) channel; it plays a direct role in translocation across the membrane. A homomeric c-ring of between 10-14 subunits forms the central stalk rotor element with the F(1) delta and epsilon subunits. This chain is ATP synthase subunit c, found in Natranaerobius thermophilus (strain ATCC BAA-1301 / DSM 18059 / JW/NM-WN-LF).